We begin with the raw amino-acid sequence, 497 residues long: L-amino-acid oxidase BjussuLAAO-I (497 aa).

The signal sequence occupies residues 1–13 (MNVFFMFSKPGKL). Residues Cys23 and Cys186 are joined by a disulfide bond. Residues 56 to 57 (MS), 76 to 77 (EA), 76 to 80 (EASER), Gln84, and 100 to 103 (GPMR) each bind FAD. Arg103 provides a ligand contact to substrate. The N-linked (GlcNAc...) asparagine glycan is linked to Asn185. Substrate is bound at residue His236. Val274 is a binding site for FAD. Cys344 and Cys425 form a disulfide bridge. Tyr385 provides a ligand contact to substrate. FAD-binding positions include Glu470, 477 to 482 (GWIAST), and 478 to 482 (WIAST). 477 to 478 (GW) provides a ligand contact to substrate.

Belongs to the flavin monoamine oxidase family. FIG1 subfamily. As to quaternary structure, homodimer; non-covalently linked. FAD serves as cofactor. In terms of tissue distribution, expressed by the venom gland.

Its subcellular location is the secreted. It catalyses the reaction an L-alpha-amino acid + O2 + H2O = a 2-oxocarboxylate + H2O2 + NH4(+). It carries out the reaction L-leucine + O2 + H2O = 4-methyl-2-oxopentanoate + H2O2 + NH4(+). The enzyme catalyses L-phenylalanine + O2 + H2O = 3-phenylpyruvate + H2O2 + NH4(+). The catalysed reaction is L-tryptophan + O2 + H2O = indole-3-pyruvate + H2O2 + NH4(+). It catalyses the reaction L-methionine + O2 + H2O = 4-methylsulfanyl-2-oxobutanoate + H2O2 + NH4(+). It carries out the reaction L-isoleucine + O2 + H2O = (S)-3-methyl-2-oxopentanoate + H2O2 + NH4(+). The enzyme catalyses L-tyrosine + O2 + H2O = 3-(4-hydroxyphenyl)pyruvate + H2O2 + NH4(+). The catalysed reaction is L-cysteine + O2 + H2O = 2-oxo-3-sulfanylpropanoate + H2O2 + NH4(+). Its function is as follows. Catalyzes an oxidative deamination of predominantly hydrophobic and aromatic L-amino acids, thus producing hydrogen peroxide that may contribute to the diverse toxic effects of this enzyme. Shows high specificity for L-Met, L-Leu, L-Phe, L-Tyr, L-Ile, L-Trp, a moderate activity on L-Cys and low activity on L-Val, L-Lys, L-Arg, L-His, L-Gln, L-Thr and L-Ser. Exhibits diverse biological activities, such as hemorrhage, hemolysis, edema, apoptosis of vascular endothelial cells or tumor cell lines, and antibacterial, as well as regulation of platelet aggregation. Effects of snake L-amino oxidases on platelets are controversial, since they either induce aggregation or inhibit agonist-induced aggregation. These different effects are probably due to different experimental conditions. In vitro, shows parasiticidal activities against both trypanosomes and leishmania, as a result of enzyme-catalyzed hydrogen peroxide production. The chain is L-amino-acid oxidase BjussuLAAO-I from Bothrops jararacussu (Jararacussu).